The sequence spans 514 residues: 2,3-bisphosphoglycerate-independent phosphoglycerate mutase (514 aa).

Residues D14 and S64 each contribute to the Mn(2+) site. S64 (phosphoserine intermediate) is an active-site residue. Residues H125, 155–156, R187, R193, 263–266, and K337 each bind substrate; these read RD and RADR. 5 residues coordinate Mn(2+): D404, H408, D445, H446, and H464.

This sequence belongs to the BPG-independent phosphoglycerate mutase family. In terms of assembly, monomer. The cofactor is Mn(2+).

It catalyses the reaction (2R)-2-phosphoglycerate = (2R)-3-phosphoglycerate. Its pathway is carbohydrate degradation; glycolysis; pyruvate from D-glyceraldehyde 3-phosphate: step 3/5. In terms of biological role, catalyzes the interconversion of 2-phosphoglycerate and 3-phosphoglycerate. The protein is 2,3-bisphosphoglycerate-independent phosphoglycerate mutase of Pseudoalteromonas translucida (strain TAC 125).